A 242-amino-acid polypeptide reads, in one-letter code: uncharacterized protein (242 aa).

2 disordered regions span residues 43 to 70 (SRRS…TSKD) and 112 to 162 (RMSR…VTPR). Positions 58-70 (QSVSGRKNSTSKD) are enriched in polar residues. Composition is skewed to low complexity over residues 122–139 (ERAA…AGHA) and 147–162 (ADGA…VTPR).

This is an uncharacterized protein from Homo sapiens (Human).